The chain runs to 216 residues: Uracil phosphoribosyltransferase (216 aa).

5-phospho-alpha-D-ribose 1-diphosphate contacts are provided by residues Arg85, Arg110, and 135–143 (DPMVATGYS). Residues Ile200 and 205–207 (GDA) each bind uracil. Residue Asp206 participates in 5-phospho-alpha-D-ribose 1-diphosphate binding.

Belongs to the UPRTase family. Mg(2+) serves as cofactor.

The catalysed reaction is UMP + diphosphate = 5-phospho-alpha-D-ribose 1-diphosphate + uracil. It functions in the pathway pyrimidine metabolism; UMP biosynthesis via salvage pathway; UMP from uracil: step 1/1. Its activity is regulated as follows. Allosterically activated by GTP. Functionally, catalyzes the conversion of uracil and 5-phospho-alpha-D-ribose 1-diphosphate (PRPP) to UMP and diphosphate. The sequence is that of Uracil phosphoribosyltransferase from Burkholderia pseudomallei (strain 668).